A 188-amino-acid chain; its full sequence is Antitoxin SocA (188 aa).

As to quaternary structure, interacts with cognate toxin SocB and with ClpX.

Its function is as follows. Antitoxin component of an atypical type II toxin-antitoxin (TA) system. Unlike most type II TA systems, neutralizes the toxic activity of cognate toxin SocB by acting as an adapter to promote its degradation by ClpXP; degradation is dependent on the N-terminus of ClpX. The polypeptide is Antitoxin SocA (Caulobacter vibrioides (strain NA1000 / CB15N) (Caulobacter crescentus)).